The following is a 568-amino-acid chain: 2-succinyl-5-enolpyruvyl-6-hydroxy-3-cyclohexene-1-carboxylate synthase (568 aa).

It belongs to the TPP enzyme family. MenD subfamily. As to quaternary structure, homodimer. Mg(2+) is required as a cofactor. The cofactor is Mn(2+). Thiamine diphosphate serves as cofactor.

It carries out the reaction isochorismate + 2-oxoglutarate + H(+) = 5-enolpyruvoyl-6-hydroxy-2-succinyl-cyclohex-3-ene-1-carboxylate + CO2. Its pathway is quinol/quinone metabolism; 1,4-dihydroxy-2-naphthoate biosynthesis; 1,4-dihydroxy-2-naphthoate from chorismate: step 2/7. It participates in quinol/quinone metabolism; menaquinone biosynthesis. Functionally, catalyzes the thiamine diphosphate-dependent decarboxylation of 2-oxoglutarate and the subsequent addition of the resulting succinic semialdehyde-thiamine pyrophosphate anion to isochorismate to yield 2-succinyl-5-enolpyruvyl-6-hydroxy-3-cyclohexene-1-carboxylate (SEPHCHC). The chain is 2-succinyl-5-enolpyruvyl-6-hydroxy-3-cyclohexene-1-carboxylate synthase from Histophilus somni (strain 129Pt) (Haemophilus somnus).